A 243-amino-acid chain; its full sequence is Carboxy-S-adenosyl-L-methionine synthase (243 aa).

S-adenosyl-L-methionine contacts are provided by residues tyrosine 35, 68–70 (GCS), 92–93 (DN), and arginine 199.

Belongs to the class I-like SAM-binding methyltransferase superfamily. Cx-SAM synthase family. In terms of assembly, homodimer.

The catalysed reaction is prephenate + S-adenosyl-L-methionine = carboxy-S-adenosyl-L-methionine + 3-phenylpyruvate + H2O. Catalyzes the conversion of S-adenosyl-L-methionine (SAM) to carboxy-S-adenosyl-L-methionine (Cx-SAM). The polypeptide is Carboxy-S-adenosyl-L-methionine synthase (Helicobacter pylori (strain J99 / ATCC 700824) (Campylobacter pylori J99)).